Here is a 194-residue protein sequence, read N- to C-terminus: Probable WRKY transcription factor 51 (194 aa).

Positions 58–97 (SSETFTGESGGSGSATTLSKKESTNRGSKESDQTKETGHR) are disordered. Over residues 76 to 96 (SKKESTNRGSKESDQTKETGH) the composition is skewed to basic and acidic residues. A DNA-binding region (WRKY) is located at residues 104–169 (SKIDVMDDGF…YEGVHNHESL (66 aa)).

This sequence belongs to the WRKY group II-c family. Interacts with CAMBP25/VQ15.

The protein resides in the nucleus. In terms of biological role, transcription factor. Interacts specifically with the W box (5'-(T)TGAC[CT]-3'), a frequently occurring elicitor-responsive cis-acting element. Involved in defense responses. May act as positive regulator of salicylic acid (SA)-mediated signaling and negative regulator of jasmonic acid (JA)-mediated signaling. In Arabidopsis thaliana (Mouse-ear cress), this protein is Probable WRKY transcription factor 51 (WRKY51).